The sequence spans 640 residues: Large subunit GTPase 1 (640 aa).

The disordered stretch occupies residues 1-26 (MPPKEAPKKWKAPKGPKPTHRKNKNK). Residues 9–24 (KWKAPKGPKPTHRKNK) are compositionally biased toward basic residues. Position 103 is a phosphoserine (Ser-103). Residues 188–394 (WKQLWRVVER…LCDCPGLVFP (207 aa)) form the CP-type G domain. GTP-binding positions include 236 to 239 (NKAD), 343 to 350 (GYPNVGKS), and 387 to 390 (DCPG). The interval 607–640 (TPFHKVQNSSAGKRHNKKNKSKNAKSKVFSIENN) is disordered. Residues 618–631 (GKRHNKKNKSKNAK) show a composition bias toward basic residues.

The protein belongs to the TRAFAC class YlqF/YawG GTPase family. LSG1 subfamily. As to quaternary structure, associates with the 60S ribosomal subunit. Interacts with ARB1.

The protein resides in the cytoplasm. GTPase required for the nuclear export of the 60S ribosomal subunit. Acts by mediating the release of NMD3 from the 60S ribosomal subunit after export into the cytoplasm. This is Large subunit GTPase 1 (LSG1) from Saccharomyces cerevisiae (strain ATCC 204508 / S288c) (Baker's yeast).